Consider the following 157-residue polypeptide: MADEQQQVFQLQRIYLKDTSFECPGAPEVFLQEWKPKVNVQLNNSARRVGEGDEFEVEITVTVTAKDEAEEKTFYLVEVKQAGIFTVKGIDGEERAQLLGAYCPNLLFPYVREVVSDLVAKGSFPQMVLQPINFDALYQQQRDQQQGNAAAAGETVQ.

The protein belongs to the SecB family. Homotetramer, a dimer of dimers. One homotetramer interacts with 1 SecA dimer.

The protein resides in the cytoplasm. In terms of biological role, one of the proteins required for the normal export of preproteins out of the cell cytoplasm. It is a molecular chaperone that binds to a subset of precursor proteins, maintaining them in a translocation-competent state. It also specifically binds to its receptor SecA. The chain is Protein-export protein SecB from Alcanivorax borkumensis (strain ATCC 700651 / DSM 11573 / NCIMB 13689 / SK2).